A 383-amino-acid polypeptide reads, in one-letter code: Succinyl-diaminopimelate desuccinylase (383 aa).

His-73 serves as a coordination point for Zn(2+). Asp-75 is an active-site residue. Asp-107 provides a ligand contact to Zn(2+). Glu-141 acts as the Proton acceptor in catalysis. Residues Glu-142, Glu-170, and His-356 each contribute to the Zn(2+) site.

It belongs to the peptidase M20A family. DapE subfamily. In terms of assembly, homodimer. It depends on Zn(2+) as a cofactor. Co(2+) serves as cofactor.

The catalysed reaction is N-succinyl-(2S,6S)-2,6-diaminopimelate + H2O = (2S,6S)-2,6-diaminopimelate + succinate. It participates in amino-acid biosynthesis; L-lysine biosynthesis via DAP pathway; LL-2,6-diaminopimelate from (S)-tetrahydrodipicolinate (succinylase route): step 3/3. In terms of biological role, catalyzes the hydrolysis of N-succinyl-L,L-diaminopimelic acid (SDAP), forming succinate and LL-2,6-diaminopimelate (DAP), an intermediate involved in the bacterial biosynthesis of lysine and meso-diaminopimelic acid, an essential component of bacterial cell walls. This is Succinyl-diaminopimelate desuccinylase from Pseudomonas syringae pv. syringae (strain B728a).